Here is a 627-residue protein sequence, read N- to C-terminus: Sister chromatid cohesion 1 protein 1 (627 aa).

3 disordered regions span residues Gly-211 to Ser-294, Met-395 to Ser-416, and Gly-461 to Glu-510. Basic and acidic residues-rich tracts occupy residues Glu-254–Phe-263, Ile-272–Gln-282, and Met-395–Asp-408. The segment covering Met-467–Lys-487 has biased composition (polar residues).

The protein belongs to the rad21 family. In terms of assembly, component of the cohesin complex. Isoform 2 is expressed at low levels in buds, leaves and roots, whereas expression of isoform 1 is confined to buds.

The protein resides in the nucleus. Its function is as follows. Involved in chromosome condensation, pairing and segregation during meiosis. Responsible for cohesion between replicated sister chromatids. The protein is Sister chromatid cohesion 1 protein 1 (SYN1) of Arabidopsis thaliana (Mouse-ear cress).